We begin with the raw amino-acid sequence, 372 residues long: MRSIIADSKRLVVKVGSSLVTNDGKGLDHAAIGRWAAQIAALRAQGKEVVLVSSGAIAEGMQRLGWSKRPREIDELQAAAAVGQMGLAQVYESRFTEHDIRTAQILLTHADLADRERYLNARSTLLTLLRLGVVPIINENDTVVTDEIKFGDNDTLGALVANLIEGDALIILTDQSGLFTADPRKDPNATLVAEASAGAPDLEAMAGGAGSSLGRGGMLTKILAAKRAAHSGANTVIASGRETDVLVRLAAGEAIGTQLIARTARMAARKQWMADHLQVRGHVVIDAGAVEKLTAGGKSLLPIGVIGVQGAFARGEVIACVGPDGREVARGLTNYSSAETKLIHRKPSGEIETVLGYMLEPELIHRDNLVLV.

Lysine 14 contacts ATP. The substrate site is built by serine 54, aspartate 141, and asparagine 153. Threonine 173–aspartate 174 serves as a coordination point for ATP. The PUA domain occupies arginine 280–methionine 358.

It belongs to the glutamate 5-kinase family.

It is found in the cytoplasm. It carries out the reaction L-glutamate + ATP = L-glutamyl 5-phosphate + ADP. It functions in the pathway amino-acid biosynthesis; L-proline biosynthesis; L-glutamate 5-semialdehyde from L-glutamate: step 1/2. In terms of biological role, catalyzes the transfer of a phosphate group to glutamate to form L-glutamate 5-phosphate. This Burkholderia ambifaria (strain ATCC BAA-244 / DSM 16087 / CCUG 44356 / LMG 19182 / AMMD) (Burkholderia cepacia (strain AMMD)) protein is Glutamate 5-kinase.